A 317-amino-acid chain; its full sequence is Heme A synthase (317 aa).

The Cytoplasmic portion of the chain corresponds to 1-6 (MQRSLK). The helical transmembrane segment at 7–27 (WFASATTLAMLFVLIGGALVT) threads the bilayer. Residues 28–62 (KTGSGMGCGRSWPLCNGQWVPDHITPELIIELSHR) lie on the Extracellular side of the membrane. Cys-35 and Cys-42 are joined by a disulfide. Glu-58 is a catalytic residue. His-61 is a heme o binding site. The helical transmembrane segment at 63–83 (LVSGLAGIMVLILSIWAWRAI) threads the bilayer. Over 84 to 90 (GHVQETK) the chain is Cytoplasmic. A helical membrane pass occupies residues 91-111 (FLAVISFVFLVLQGLIGAAAV). Topologically, residues 112–121 (VWGQSDFVLA) are extracellular. Residues 122-142 (LHFGISLISFAAVLLLTLLIF) form a helical membrane-spanning segment. His-123 contacts heme o. The Cytoplasmic portion of the chain corresponds to 143–159 (EIDKTFSAASLSLDGKM). Residues 160–180 (RFHIYGITIYSYIVVYTGALV) form a helical membrane-spanning segment. Over 181–211 (RHTNASLACPSWPLCAKTRLLPVQFHEWVQM) the chain is Extracellular. Residues Cys-189 and Cys-195 are joined by a disulfide bond. A helical transmembrane segment spans residues 212–232 (GHRLAAAVIIIWIAAAAIHAV). His-213 is a heme b binding site. At 233-243 (RHYRRQPVIYY) the chain is on the cytoplasmic side. Residues 244 to 264 (GWLIALLLVLAQMTTGALVVF) form a helical membrane-spanning segment. The Extracellular segment spans residues 265–270 (TQLNLY). A helical membrane pass occupies residues 271-291 (IALAHAFFISCLFGVLSYLLL). Position 275 (His-275) interacts with heme b. Residues 292 to 317 (LALRTRRAPVKAADHSAGEAAPATLK) lie on the Cytoplasmic side of the membrane.

It belongs to the COX15/CtaA family. Type 1 subfamily. In terms of assembly, interacts with CtaB. It depends on heme b as a cofactor.

It localises to the cell membrane. It carries out the reaction Fe(II)-heme o + 2 A + H2O = Fe(II)-heme a + 2 AH2. Its pathway is porphyrin-containing compound metabolism; heme A biosynthesis; heme A from heme O: step 1/1. Functionally, catalyzes the conversion of heme O to heme A by two successive hydroxylations of the methyl group at C8. The first hydroxylation forms heme I, the second hydroxylation results in an unstable dihydroxymethyl group, which spontaneously dehydrates, resulting in the formyl group of heme A. This Geobacillus kaustophilus (strain HTA426) protein is Heme A synthase.